Consider the following 249-residue polypeptide: tRNA (guanine-N(1)-)-methyltransferase (249 aa).

Residues Gly113 and 133-138 contribute to the S-adenosyl-L-methionine site; that span reads IGDFVV.

This sequence belongs to the RNA methyltransferase TrmD family. In terms of assembly, homodimer.

Its subcellular location is the cytoplasm. The enzyme catalyses guanosine(37) in tRNA + S-adenosyl-L-methionine = N(1)-methylguanosine(37) in tRNA + S-adenosyl-L-homocysteine + H(+). Functionally, specifically methylates guanosine-37 in various tRNAs. The sequence is that of tRNA (guanine-N(1)-)-methyltransferase from Neisseria meningitidis serogroup C (strain 053442).